The sequence spans 389 residues: tRNA-specific 2-thiouridylase MnmA (389 aa).

ATP is bound by residues 21–28 (AMSGGVDS) and Leu47. The active-site Nucleophile is the Cys115. Cys115 and Cys212 are joined by a disulfide. Gly139 serves as a coordination point for ATP. The interaction with tRNA stretch occupies residues 162 to 164 (RDQ). The Cysteine persulfide intermediate role is filled by Cys212.

It belongs to the MnmA/TRMU family.

The protein localises to the cytoplasm. The catalysed reaction is S-sulfanyl-L-cysteinyl-[protein] + uridine(34) in tRNA + AH2 + ATP = 2-thiouridine(34) in tRNA + L-cysteinyl-[protein] + A + AMP + diphosphate + H(+). In terms of biological role, catalyzes the 2-thiolation of uridine at the wobble position (U34) of tRNA, leading to the formation of s(2)U34. This is tRNA-specific 2-thiouridylase MnmA from Xanthobacter autotrophicus (strain ATCC BAA-1158 / Py2).